The chain runs to 318 residues: 4-hydroxy-3-methylbut-2-enyl diphosphate reductase (318 aa).

Residue Cys-12 coordinates [4Fe-4S] cluster. Residues His-41 and His-74 each coordinate (2E)-4-hydroxy-3-methylbut-2-enyl diphosphate. Dimethylallyl diphosphate contacts are provided by His-41 and His-74. Residues His-41 and His-74 each coordinate isopentenyl diphosphate. Cys-96 is a [4Fe-4S] cluster binding site. His-124 contacts (2E)-4-hydroxy-3-methylbut-2-enyl diphosphate. His-124 lines the dimethylallyl diphosphate pocket. His-124 provides a ligand contact to isopentenyl diphosphate. Glu-126 acts as the Proton donor in catalysis. Thr-167 provides a ligand contact to (2E)-4-hydroxy-3-methylbut-2-enyl diphosphate. Residue Cys-197 coordinates [4Fe-4S] cluster. (2E)-4-hydroxy-3-methylbut-2-enyl diphosphate contacts are provided by Ser-225, Ser-226, Asn-227, and Ser-269. 4 residues coordinate dimethylallyl diphosphate: Ser-225, Ser-226, Asn-227, and Ser-269. Residues Ser-225, Ser-226, Asn-227, and Ser-269 each contribute to the isopentenyl diphosphate site.

It belongs to the IspH family. The cofactor is [4Fe-4S] cluster.

It carries out the reaction isopentenyl diphosphate + 2 oxidized [2Fe-2S]-[ferredoxin] + H2O = (2E)-4-hydroxy-3-methylbut-2-enyl diphosphate + 2 reduced [2Fe-2S]-[ferredoxin] + 2 H(+). It catalyses the reaction dimethylallyl diphosphate + 2 oxidized [2Fe-2S]-[ferredoxin] + H2O = (2E)-4-hydroxy-3-methylbut-2-enyl diphosphate + 2 reduced [2Fe-2S]-[ferredoxin] + 2 H(+). It participates in isoprenoid biosynthesis; dimethylallyl diphosphate biosynthesis; dimethylallyl diphosphate from (2E)-4-hydroxy-3-methylbutenyl diphosphate: step 1/1. Its pathway is isoprenoid biosynthesis; isopentenyl diphosphate biosynthesis via DXP pathway; isopentenyl diphosphate from 1-deoxy-D-xylulose 5-phosphate: step 6/6. Catalyzes the conversion of 1-hydroxy-2-methyl-2-(E)-butenyl 4-diphosphate (HMBPP) into a mixture of isopentenyl diphosphate (IPP) and dimethylallyl diphosphate (DMAPP). Acts in the terminal step of the DOXP/MEP pathway for isoprenoid precursor biosynthesis. The sequence is that of 4-hydroxy-3-methylbut-2-enyl diphosphate reductase from Francisella philomiragia subsp. philomiragia (strain ATCC 25017 / CCUG 19701 / FSC 153 / O#319-036).